The primary structure comprises 506 residues: 2,3-bisphosphoglycerate-independent phosphoglycerate mutase (506 aa).

Residues aspartate 13 and serine 63 each contribute to the Mn(2+) site. Catalysis depends on serine 63, which acts as the Phosphoserine intermediate. Residues histidine 124, 153-154 (RD), arginine 183, arginine 189, 254-257 (RADR), and lysine 330 each bind substrate. Mn(2+) contacts are provided by aspartate 396, histidine 400, aspartate 437, histidine 438, and histidine 456.

This sequence belongs to the BPG-independent phosphoglycerate mutase family. Monomer. Requires Mn(2+) as cofactor.

The enzyme catalyses (2R)-2-phosphoglycerate = (2R)-3-phosphoglycerate. The protein operates within carbohydrate degradation; glycolysis; pyruvate from D-glyceraldehyde 3-phosphate: step 3/5. Its function is as follows. Catalyzes the interconversion of 2-phosphoglycerate and 3-phosphoglycerate. The polypeptide is 2,3-bisphosphoglycerate-independent phosphoglycerate mutase (Cereibacter sphaeroides (strain ATCC 17025 / ATH 2.4.3) (Rhodobacter sphaeroides)).